The following is a 205-amino-acid chain: Large ribosomal subunit protein uL3 (205 aa).

This sequence belongs to the universal ribosomal protein uL3 family. As to quaternary structure, part of the 50S ribosomal subunit. Forms a cluster with proteins L14 and L19.

One of the primary rRNA binding proteins, it binds directly near the 3'-end of the 23S rRNA, where it nucleates assembly of the 50S subunit. The protein is Large ribosomal subunit protein uL3 of Thermosipho africanus (strain TCF52B).